The chain runs to 66 residues: Large ribosomal subunit protein uL29 (66 aa).

Belongs to the universal ribosomal protein uL29 family.

The chain is Large ribosomal subunit protein uL29 from Borreliella burgdorferi (strain ZS7) (Borrelia burgdorferi).